A 325-amino-acid polypeptide reads, in one-letter code: Olfactory receptor 5H6 (325 aa).

The Extracellular portion of the chain corresponds to 1-41 (MFLYLCFIFQRTCSEEMEEENATLLTEFVLTGFLHQPDCKI). Asn-21 carries N-linked (GlcNAc...) asparagine glycosylation. Residues 42-62 (PLFLAFLVIYLITIMGNLGLI) form a helical membrane-spanning segment. Residues 63-70 (VLIWKDPH) are Cytoplasmic-facing. Residues 71–91 (LHIPMYLFLGSLAFVDASLSS) traverse the membrane as a helical segment. The Extracellular portion of the chain corresponds to 92 to 115 (TVTPKMLINFLAKSKMISLSECMV). Cys-113 and Cys-205 are joined by a disulfide. A helical membrane pass occupies residues 116–136 (QFFSLVTTVTTECFLLATMAY). Over 137 to 155 (DRYVAICKALLYPVIMTNE) the chain is Cytoplasmic. A helical transmembrane segment spans residues 156 to 176 (LCIQLLVLSFIGGLLHALIHE). Over 177–212 (AFSFRLTFCNSNIIQHFYCDIIPLLKISCTDSSINF) the chain is Extracellular. Residues 213 to 233 (LMVFIFAGSVQVFTIGTILIS) traverse the membrane as a helical segment. Residues 234 to 253 (YTIILFTILEKKSIKGIRKA) lie on the Cytoplasmic side of the membrane. A helical membrane pass occupies residues 254–274 (VSTCGAHLLSVSLYYGPLTFK). Residues 275–287 (YLGSASPQADDQD) lie on the Extracellular side of the membrane. Residues 288–308 (MMESLFYTVIVPLLNPMIYSL) traverse the membrane as a helical segment. Residues 309–325 (RNKQVIASFTKMFKSNV) lie on the Cytoplasmic side of the membrane.

It belongs to the G-protein coupled receptor 1 family.

The protein localises to the cell membrane. Functionally, odorant receptor. The chain is Olfactory receptor 5H6 (OR5H6) from Homo sapiens (Human).